We begin with the raw amino-acid sequence, 426 residues long: Serine--tRNA ligase (426 aa).

233–235 contributes to the L-serine binding site; that stretch reads TAE. 264–266 lines the ATP pocket; that stretch reads RSE. Residue E287 coordinates L-serine. Residue 351 to 354 participates in ATP binding; the sequence is EISS. S387 lines the L-serine pocket.

It belongs to the class-II aminoacyl-tRNA synthetase family. Type-1 seryl-tRNA synthetase subfamily. As to quaternary structure, homodimer. The tRNA molecule binds across the dimer.

It is found in the cytoplasm. The catalysed reaction is tRNA(Ser) + L-serine + ATP = L-seryl-tRNA(Ser) + AMP + diphosphate + H(+). It carries out the reaction tRNA(Sec) + L-serine + ATP = L-seryl-tRNA(Sec) + AMP + diphosphate + H(+). Its pathway is aminoacyl-tRNA biosynthesis; selenocysteinyl-tRNA(Sec) biosynthesis; L-seryl-tRNA(Sec) from L-serine and tRNA(Sec): step 1/1. Functionally, catalyzes the attachment of serine to tRNA(Ser). Is also able to aminoacylate tRNA(Sec) with serine, to form the misacylated tRNA L-seryl-tRNA(Sec), which will be further converted into selenocysteinyl-tRNA(Sec). The polypeptide is Serine--tRNA ligase (Pseudomonas putida (strain GB-1)).